The chain runs to 333 residues: Ornithine carbamoyltransferase (333 aa).

Carbamoyl phosphate-binding positions include 56–59 (STRT), Gln-83, Arg-107, and 134–137 (HPTQ). L-ornithine-binding positions include Asn-167, Asp-231, and 235-236 (SM). Carbamoyl phosphate-binding positions include 273–274 (CL) and Arg-318.

The protein belongs to the aspartate/ornithine carbamoyltransferase superfamily. OTCase family.

It is found in the cytoplasm. The catalysed reaction is carbamoyl phosphate + L-ornithine = L-citrulline + phosphate + H(+). It participates in amino-acid biosynthesis; L-arginine biosynthesis; L-arginine from L-ornithine and carbamoyl phosphate: step 1/3. Functionally, has vitronectin and fibronectin-binding activity. In terms of biological role, reversibly catalyzes the transfer of the carbamoyl group from carbamoyl phosphate (CP) to the N(epsilon) atom of ornithine (ORN) to produce L-citrulline. The sequence is that of Ornithine carbamoyltransferase (argF) from Staphylococcus epidermidis (strain ATCC 12228 / FDA PCI 1200).